The chain runs to 282 residues: Energy-coupling factor transporter ATP-binding protein EcfA1 (282 aa).

Residues 9-243 enclose the ABC transporter domain; that stretch reads IEIDNLSFKY…NDELLNIGLD (235 aa). 43 to 50 contacts ATP; sequence GHNGSGKS.

It belongs to the ABC transporter superfamily. Energy-coupling factor EcfA family. Forms a stable energy-coupling factor (ECF) transporter complex composed of 2 membrane-embedded substrate-binding proteins (S component), 2 ATP-binding proteins (A component) and 2 transmembrane proteins (T component).

The protein resides in the cell membrane. Functionally, ATP-binding (A) component of a common energy-coupling factor (ECF) ABC-transporter complex. Unlike classic ABC transporters this ECF transporter provides the energy necessary to transport a number of different substrates. In Ligilactobacillus salivarius (strain UCC118) (Lactobacillus salivarius), this protein is Energy-coupling factor transporter ATP-binding protein EcfA1.